The following is a 1769-amino-acid chain: Tight junction protein 1 (1769 aa).

A PDZ 1 domain is found at 23 to 110 (TVTLHRAPGF…NAKITIRRKK (88 aa)). The segment covering 102 to 112 (AKITIRRKKKV) has biased composition (basic residues). A disordered region spans residues 102 to 188 (AKITIRRKKK…QPPKPTKVTL (87 aa)). The segment covering 123 to 135 (PVSENEDSYDEEV) has biased composition (acidic residues). Ser125 carries the phosphoserine modification. Phosphotyrosine is present on Tyr131. Basic and acidic residues predominate over residues 148-174 (RRSEKSWARDRSASRERSLSPRSDRRS). Phosphoserine is present on residues Ser174, Ser177, and Ser178. Thr184 carries the phosphothreonine modification. The PDZ 2 domain maps to 185–263 (KVTLVKSRKN…KLKMVVQRDE (79 aa)). A phosphoserine mark is found at Ser211 and Ser240. Position 266 is a phosphothreonine (Thr266). 13 positions are modified to phosphoserine: Ser274, Ser276, Ser279, Ser283, Ser289, Ser293, Ser296, Ser299, Ser322, Ser328, Ser333, Ser336, and Ser352. The interval 295–362 (ASDHSGRSHD…TPVKHADDHT (68 aa)) is disordered. Positions 298-326 (HSGRSHDRPPRHSRSRSPDQRSEPSDHSR) are enriched in basic and acidic residues. Thr353 is modified (phosphothreonine). The region spanning 420–501 (SMKLVKFRKG…GEEVTILAQK (82 aa)) is the PDZ 3 domain. In terms of domain architecture, SH3 spans 515-583 (GDSFYIRTHF…PNKNRAEQLA (69 aa)). A Guanylate kinase-like domain is found at 609–790 (SKRNLRKSRE…WYGALKEAIQ (182 aa)). Phosphoserine is present on residues Ser616 and Ser621. Residues 632–875 (YERVVLREAG…GTPPESAITR (244 aa)) are occludin (OCLN)-binding region. Thr808 bears the Phosphothreonine mark. Ser809 and Ser820 each carry phosphoserine. Tyr821 bears the Phosphotyrosine mark. A phosphoserine mark is found at Ser823, Ser827, and Ser836. Disordered stretches follow at residues 824 to 976 (APGS…LRTP) and 1010 to 1067 (EMMR…SYTD). Thr845, Thr847, Thr853, Thr860, and Thr867 each carry phosphothreonine. Positions 878-891 (EPVREDSSGMHHEN) are enriched in basic and acidic residues. Residues 892 to 905 (QTYPPYSPQAQPQP) are compositionally biased toward low complexity. At Ser911 the chain carries Phosphoserine. Polar residues-rich tracts occupy residues 933–952 (PETN…TLTN) and 962–976 (PSTS…LRTP). Residue Ser967 is modified to Phosphoserine. Residue Ser1070 is modified to Phosphoserine. Disordered stretches follow at residues 1091–1212 (SYYD…KAGH), 1224–1261 (PLIP…MKPQ), and 1273–1589 (KRSA…EFDS). The span at 1108-1124 (QHPRDLDSRQHPEESSE) shows a compositional bias: basic and acidic residues. The residue at position 1138 (Ser1138) is a Phosphoserine. A phosphotyrosine mark is found at Tyr1139 and Tyr1164. The tract at residues 1150-1370 (RTSTLRHEEQ…FDRRSFENKP (221 aa)) is actin-binding region (ABR). The span at 1273–1286 (KRSASLENKKDENH) shows a compositional bias: basic and acidic residues. Residues 1300–1310 (PGAPIIGPKPT) show a composition bias toward pro residues. The segment covering 1335-1346 (PPEDIVRSNHYD) has biased composition (basic and acidic residues). Phosphotyrosine is present on Tyr1353. Ser1365 bears the Phosphoserine mark. Residues 1387 to 1401 (HSQNQTNFSSYSSKG) show a composition bias toward polar residues. Positions 1402–1419 (KSPEADAPDRSFGEKRYE) are enriched in basic and acidic residues. At Ser1412 the chain carries Phosphoserine. Composition is skewed to polar residues over residues 1460 to 1471 (NSISLDFQNSLV) and 1514 to 1523 (AEQTQKTVTP). Positions 1539–1548 (PFERKFESPK) are enriched in basic and acidic residues. A phosphoserine mark is found at Ser1546 and Ser1618. The ZU5 domain maps to 1635–1769 (ATARGVFNNN…NCVSVLIDHF (135 aa)).

Belongs to the MAGUK family. Homodimer. Forms heterodimers TJP3. Forms a heterodimer (via PDZ2 domain) with TJP2/ZO2 (via PDZ2 domain). Interacts with OCLN. Interacts with CALM, claudins, CGN/cingulin, CXADR, GJA12, GJD3 and UBN1. Interacts (via ZU5 domain) with CDC42BPB and MYZAP. Interacts (via PDZ domain) with GJA1. Interacts (via PDZ domains) with ANKRD2. Interacts with POPDC1 (via the C-terminus cytoplasmic tail). Interacts with HSPA4. Interacts with KIRREL1. Interacts with DLL1. Interacts with USP53 (via the C-terminal region). Interacts with DNMBP (via C-terminal domain); required for the apical cell-cell junction localization of DNMBP. Interacts with SPEF1. Interacts (via N-terminus) with CTNNA1. Interacts with CLDN18. Interacts with CLDN16 (via TRV motif); this is a prerequisite for anchoring of CLDN16 at the tight junction. Interacts with PKP1; the interaction facilitates TJP1/ZO-1 localization to the plasma membrane. Interacts with PATJ (via PDZ1-6 domains); the interaction is required for attachment and extension of TJP1/ZO1 condensates along the apical cell interface. Phosphorylated at tyrosine redidues in response to epidermal growth factor (EGF). This response is dependent on an intact actin microfilament system. Dephosphorylated by PTPRJ.

The protein resides in the cell membrane. It is found in the cell junction. The protein localises to the tight junction. Its subcellular location is the gap junction. TJP1, TJP2, and TJP3 are closely related scaffolding proteins that link tight junction (TJ) transmembrane proteins such as claudins, junctional adhesion molecules, and occludin to the actin cytoskeleton. Forms a multistranded TJP1/ZO1 condensate which elongates to form a tight junction belt, the belt is anchored at the apical cell membrane via interaction with PATJ. The tight junction acts to limit movement of substances through the paracellular space and as a boundary between the compositionally distinct apical and basolateral plasma membrane domains of epithelial and endothelial cells. Necessary for lumenogenesis, and particularly efficient epithelial polarization and barrier formation. Plays a role in the regulation of cell migration by targeting CDC42BPBb to the leading edge of migrating cells. With TJP2 and TJP3, participates in the junctional retention and stability of the transcription factor DBPA, but is not involved in its shuttling to the nucleus. May play a role in mediating cell morphology changes during ameloblast differentiation via its role in tight junctions. This Canis lupus familiaris (Dog) protein is Tight junction protein 1.